A 263-amino-acid chain; its full sequence is Small ribosomal subunit protein uS2 (263 aa).

Belongs to the universal ribosomal protein uS2 family. In terms of assembly, component of the small ribosomal subunit. Mature ribosomes consist of a small (40S) and a large (60S) subunit. The 40S subunit contains about 33 different proteins and 1 molecule of RNA (18S). The 60S subunit contains about 49 different proteins and 3 molecules of RNA (25S, 5.8S and 5S). Interacts with RPS21.

The protein localises to the cytoplasm. Its function is as follows. Required for the assembly and/or stability of the 40S ribosomal subunit. Required for the processing of the 20S rRNA-precursor to mature 18S rRNA in a late step of the maturation of 40S ribosomal subunits. The protein is Small ribosomal subunit protein uS2 of Vairimorpha ceranae (strain BRL01) (Microsporidian parasite).